Here is a 302-residue protein sequence, read N- to C-terminus: MRHLISMRDIGREEILNILDESERMEAILNEKGHCDFLNGRILATLFYEPSTRTRLSFETAMKRLGGNVIGFTDISNTSVTKGESLADTIKVISGYSDLIAIRHPSEGAARLSGENSKVPVINAGDGSNQHPTQTLLDLYTIKREVGHIENLKIAFIGDLKYGRTVHSLCQALSLFKGVEIKLISPEELKMPREVIEDIDGKIKLSEMTDVEIEDVDVVYMTRIQKERFVDVNEYYKVKGIYRLSKEHIGDKDVVIMHPLPRVDEIDSEVDNLPQARYFKQSFYGVPVRMAILKLLFEDSVK.

Carbamoyl phosphate contacts are provided by Arg53 and Thr54. Lys82 provides a ligand contact to L-aspartate. Carbamoyl phosphate contacts are provided by Arg103, His131, and Gln134. 2 residues coordinate L-aspartate: Arg164 and Arg223. 2 residues coordinate carbamoyl phosphate: Leu260 and Pro261.

This sequence belongs to the aspartate/ornithine carbamoyltransferase superfamily. ATCase family. Heterooligomer of catalytic and regulatory chains.

The enzyme catalyses carbamoyl phosphate + L-aspartate = N-carbamoyl-L-aspartate + phosphate + H(+). It functions in the pathway pyrimidine metabolism; UMP biosynthesis via de novo pathway; (S)-dihydroorotate from bicarbonate: step 2/3. Functionally, catalyzes the condensation of carbamoyl phosphate and aspartate to form carbamoyl aspartate and inorganic phosphate, the committed step in the de novo pyrimidine nucleotide biosynthesis pathway. This Methanococcus maripaludis (strain C5 / ATCC BAA-1333) protein is Aspartate carbamoyltransferase catalytic subunit.